The following is a 557-amino-acid chain: Dihydroxy-acid dehydratase (557 aa).

Mg(2+) is bound at residue Asp-78. Cys-119 contributes to the [2Fe-2S] cluster binding site. The Mg(2+) site is built by Asp-120 and Lys-121. Lys-121 bears the N6-carboxylysine mark. Residue Cys-192 participates in [2Fe-2S] cluster binding. Glu-442 contacts Mg(2+). Ser-468 (proton acceptor) is an active-site residue.

The protein belongs to the IlvD/Edd family. In terms of assembly, homodimer. [2Fe-2S] cluster is required as a cofactor. Requires Mg(2+) as cofactor.

The catalysed reaction is (2R)-2,3-dihydroxy-3-methylbutanoate = 3-methyl-2-oxobutanoate + H2O. The enzyme catalyses (2R,3R)-2,3-dihydroxy-3-methylpentanoate = (S)-3-methyl-2-oxopentanoate + H2O. Its pathway is amino-acid biosynthesis; L-isoleucine biosynthesis; L-isoleucine from 2-oxobutanoate: step 3/4. It functions in the pathway amino-acid biosynthesis; L-valine biosynthesis; L-valine from pyruvate: step 3/4. In terms of biological role, functions in the biosynthesis of branched-chain amino acids. Catalyzes the dehydration of (2R,3R)-2,3-dihydroxy-3-methylpentanoate (2,3-dihydroxy-3-methylvalerate) into 2-oxo-3-methylpentanoate (2-oxo-3-methylvalerate) and of (2R)-2,3-dihydroxy-3-methylbutanoate (2,3-dihydroxyisovalerate) into 2-oxo-3-methylbutanoate (2-oxoisovalerate), the penultimate precursor to L-isoleucine and L-valine, respectively. This is Dihydroxy-acid dehydratase from Bacillus cereus (strain 03BB102).